Consider the following 491-residue polypeptide: Pyruvate carboxylase subunit A (491 aa).

The Biotin carboxylation domain maps to 1-445 (MFSKILVANR…HTHFVDEYRR (445 aa)). Residues Lys-116, Glu-200, and His-235 each coordinate ATP. Residues 120–316 (KKLMKKAGVP…LVKEQIRVAS (197 aa)) form the ATP-grasp domain. The active site involves Arg-291.

Heterooctamer of four A and four B subunits. Requires Mg(2+) as cofactor. The cofactor is Mn(2+). It depends on Co(2+) as a cofactor.

The enzyme catalyses hydrogencarbonate + pyruvate + ATP = oxaloacetate + ADP + phosphate + H(+). It functions in the pathway carbohydrate biosynthesis; gluconeogenesis. Its activity is regulated as follows. Inhibited by ADP and alpha-ketoglutarate. Pyruvate carboxylase catalyzes a 2-step reaction, involving the ATP-dependent carboxylation of the covalently attached biotin in the first step and the transfer of the carboxyl group to pyruvate in the second. The polypeptide is Pyruvate carboxylase subunit A (pycA) (Methanothermobacter thermautotrophicus (strain ATCC 29096 / DSM 1053 / JCM 10044 / NBRC 100330 / Delta H) (Methanobacterium thermoautotrophicum)).